We begin with the raw amino-acid sequence, 284 residues long: RNase adapter protein RapZ (284 aa).

Position 8 to 15 (8 to 15 (GRSGSGKS)) interacts with ATP. GTP is bound at residue 56–59 (DVRN). An RNA-binding region spans residues 266–284 (RSRGKNVQSRHRTLEKRKS).

Belongs to the RapZ-like family. RapZ subfamily. In terms of assembly, homotrimer.

In terms of biological role, modulates the synthesis of GlmS, by affecting the processing and stability of the regulatory small RNA GlmZ. When glucosamine-6-phosphate (GlcN6P) concentrations are high in the cell, RapZ binds GlmZ and targets it to cleavage by RNase E. Consequently, GlmZ is inactivated and unable to activate GlmS synthesis. Under low GlcN6P concentrations, RapZ is sequestered and inactivated by an other regulatory small RNA, GlmY, preventing GlmZ degradation and leading to synthesis of GlmS. The protein is RNase adapter protein RapZ of Klebsiella oxytoca.